We begin with the raw amino-acid sequence, 319 residues long: HTH-type transcriptional regulator YidZ (319 aa).

An HTH lysR-type domain is found at 8 to 65 (LDLNLLLCLQLLMQERSVTKAAKRMNVTPSAVSKSLAKLRAWFDDPLFVNSPLGLSPT). A DNA-binding region (H-T-H motif) is located at residues 25–44 (VTKAAKRMNVTPSAVSKSLA).

It belongs to the LysR transcriptional regulatory family.

Its function is as follows. Involved in anaerobic NO protection. This Escherichia coli O157:H7 (strain EC4115 / EHEC) protein is HTH-type transcriptional regulator YidZ.